A 281-amino-acid polypeptide reads, in one-letter code: 4-diphosphocytidyl-2-C-methyl-D-erythritol kinase (281 aa).

Catalysis depends on residues K11 and D138.

The protein belongs to the GHMP kinase family. IspE subfamily.

The enzyme catalyses 4-CDP-2-C-methyl-D-erythritol + ATP = 4-CDP-2-C-methyl-D-erythritol 2-phosphate + ADP + H(+). The protein operates within isoprenoid biosynthesis; isopentenyl diphosphate biosynthesis via DXP pathway; isopentenyl diphosphate from 1-deoxy-D-xylulose 5-phosphate: step 3/6. Functionally, catalyzes the phosphorylation of the position 2 hydroxy group of 4-diphosphocytidyl-2C-methyl-D-erythritol. This chain is 4-diphosphocytidyl-2-C-methyl-D-erythritol kinase, found in Pelagibacter ubique (strain HTCC1062).